The following is a 110-amino-acid chain: Protein YcgL (110 aa).

The region spanning 14-98 (MFCVIYRSSK…PPEDLLKQHL (85 aa)) is the YcgL domain. The interval 88–110 (PPPEDLLKQHLSSVGQNTSPADR) is disordered. Residues 97–110 (HLSSVGQNTSPADR) are compositionally biased toward polar residues.

The polypeptide is Protein YcgL (Salmonella paratyphi A (strain ATCC 9150 / SARB42)).